The chain runs to 70 residues: Probable protein transport protein Sec61 subunit gamma (70 aa).

Over M1 to Q39 the chain is Cytoplasmic. The helical transmembrane segment at A40–I58 threads the bilayer. Over H59–A70 the chain is Extracellular.

It belongs to the SecE/SEC61-gamma family. Heterotrimeric complex composed of SEC61-alpha, SEC61-beta and SEC61-gamma.

It is found in the endoplasmic reticulum membrane. Functionally, necessary for protein translocation in the endoplasmic reticulum. This is Probable protein transport protein Sec61 subunit gamma from Neurospora crassa (strain ATCC 24698 / 74-OR23-1A / CBS 708.71 / DSM 1257 / FGSC 987).